A 219-amino-acid chain; its full sequence is MISNSEYHKEYMKGTTTVGLLCKDGVVLATDKRATMGNLIADKEAKKLYKIDDYIAMTIAGSVGDAQSLIRIISAEAKIHKMRTGNNMTPLSCTTLISNVLHGNRHYPLLTQLILGGYDLINGAKLFSLDPVGGINEESSFTATGSGSPTAYGVLEAEYRSDVTIDKGLLVAVKALSSAMQRDAYSGNGISLAHINKDGVKLYSDAEIEGFLKKINKKR.

Residues 1–14 constitute a propeptide, removed in mature form; by autocatalysis; the sequence is MISNSEYHKEYMKG. The active-site Nucleophile is T15.

Belongs to the peptidase T1B family. As to quaternary structure, the 20S proteasome core is composed of 14 alpha and 14 beta subunits that assemble into four stacked heptameric rings, resulting in a barrel-shaped structure. The two inner rings, each composed of seven catalytic beta subunits, are sandwiched by two outer rings, each composed of seven alpha subunits. The catalytic chamber with the active sites is on the inside of the barrel. Has a gated structure, the ends of the cylinder being occluded by the N-termini of the alpha-subunits. Is capped at one or both ends by the proteasome regulatory ATPase, PAN.

The protein resides in the cytoplasm. It carries out the reaction Cleavage of peptide bonds with very broad specificity.. With respect to regulation, the formation of the proteasomal ATPase PAN-20S proteasome complex, via the docking of the C-termini of PAN into the intersubunit pockets in the alpha-rings, triggers opening of the gate for substrate entry. Interconversion between the open-gate and close-gate conformations leads to a dynamic regulation of the 20S proteasome proteolysis activity. Functionally, component of the proteasome core, a large protease complex with broad specificity involved in protein degradation. This is Proteasome subunit beta from Methanococcus maripaludis (strain C5 / ATCC BAA-1333).